Consider the following 275-residue polypeptide: Beta-lactamase OXA-3 (275 aa).

The N-terminal stretch at 1–21 (MAIRIFAILFSTFVFGTFAHA) is a signal peptide. Residue Ser-72 is the Acyl-ester intermediate of the active site. Lys-75 carries the post-translational modification N6-carboxylysine. 210-212 (KTG) lines the substrate pocket.

This sequence belongs to the class-D beta-lactamase family.

It carries out the reaction a beta-lactam + H2O = a substituted beta-amino acid. Functionally, this is an oxacillin-hydrolyzing beta-lactamase. The chain is Beta-lactamase OXA-3 (bla) from Pseudomonas aeruginosa.